Consider the following 208-residue polypeptide: Granulocyte colony-stimulating factor (208 aa).

The signal sequence occupies residues 1–30; sequence MAQLSAQRRMKLMALQLLLWQSALWSGREA. 2 disulfide bridges follow: Cys-72-Cys-78 and Cys-100-Cys-110. A glycan (O-linked (GalNAc...) threonine) is linked at Thr-169.

It belongs to the IL-6 superfamily. In terms of assembly, monomer. In terms of processing, O-glycosylated.

The protein resides in the secreted. In terms of biological role, granulocyte/macrophage colony-stimulating factors are cytokines that act in hematopoiesis by controlling the production, differentiation, and function of 2 related white cell populations of the blood, the granulocytes and the monocytes-macrophages. This CSF induces granulocytes. This chain is Granulocyte colony-stimulating factor (Csf3), found in Mus musculus (Mouse).